Here is a 284-residue protein sequence, read N- to C-terminus: Tryptophan 2,3-dioxygenase (284 aa).

Residues 53 to 57 (FIVQH), Tyr115, and Arg119 contribute to the substrate site. Residue His242 coordinates heme. A substrate-binding site is contributed by Thr256.

The protein belongs to the tryptophan 2,3-dioxygenase family. In terms of assembly, homotetramer. It depends on heme as a cofactor.

It carries out the reaction L-tryptophan + O2 = N-formyl-L-kynurenine. It functions in the pathway amino-acid degradation; L-tryptophan degradation via kynurenine pathway; L-kynurenine from L-tryptophan: step 1/2. Functionally, heme-dependent dioxygenase that catalyzes the oxidative cleavage of the L-tryptophan (L-Trp) pyrrole ring and converts L-tryptophan to N-formyl-L-kynurenine. Catalyzes the oxidative cleavage of the indole moiety. The protein is Tryptophan 2,3-dioxygenase of Bordetella parapertussis (strain 12822 / ATCC BAA-587 / NCTC 13253).